Consider the following 533-residue polypeptide: Fimbrial subunit type 1 (533 aa).

Residues 1–30 form the signal peptide; that stretch reads MHSLNTRRGLGLAAAMTLAAGALVAPTGAA. The LPXTG sorting signal motif lies at 496–500; it reads LPLTG. Position 499 is a pentaglycyl murein peptidoglycan amidated threonine (T499). A propeptide spans 500–533 (removed by sortase); that stretch reads GANGVIFLTIAGALLVAGGAVVAYANKRRHVAKH.

It is found in the secreted. The protein localises to the cell wall. The protein resides in the fimbrium. Major fimbrial subunit of A.viscosus. This is Fimbrial subunit type 1 from Actinomyces viscosus.